We begin with the raw amino-acid sequence, 381 residues long: Pentraxin-related protein PTX3 (381 aa).

The N-terminal stretch at 1–17 (MHLPAILLCALWSAVVA) is a signal peptide. 2 disulfides stabilise this stretch: Cys179/Cys357 and Cys210/Cys271. The Pentraxin (PTX) domain occupies 179-381 (CETAIFFPMR…QAHGGAQYVS (203 aa)). Asn220 carries N-linked (GlcNAc...) asparagine glycosylation.

As to quaternary structure, homooctamer; disulfide-linked. Binds to C1q.

The protein resides in the secreted. Plays a role in the regulation of innate resistance to pathogens, inflammatory reactions, possibly clearance of self-components and female fertility. In Mus musculus (Mouse), this protein is Pentraxin-related protein PTX3 (Ptx3).